We begin with the raw amino-acid sequence, 264 residues long: Glutamate racemase (264 aa).

Substrate contacts are provided by residues Asp10–Ser11 and Tyr42–Gly43. Cys73 (proton donor/acceptor) is an active-site residue. Asn74–Thr75 is a substrate binding site. Catalysis depends on Cys183, which acts as the Proton donor/acceptor. Position 184 to 185 (Thr184 to His185) interacts with substrate.

Belongs to the aspartate/glutamate racemases family.

The catalysed reaction is L-glutamate = D-glutamate. It functions in the pathway cell wall biogenesis; peptidoglycan biosynthesis. In terms of biological role, provides the (R)-glutamate required for cell wall biosynthesis. The polypeptide is Glutamate racemase (Streptococcus pyogenes serotype M2 (strain MGAS10270)).